The following is a 288-amino-acid chain: NGG1-interacting factor 3 (288 aa).

This sequence belongs to the GTP cyclohydrolase I type 2/NIF3 family. In terms of assembly, may interact with NGG1.

The protein localises to the mitochondrion. The sequence is that of NGG1-interacting factor 3 from Saccharomyces cerevisiae (strain ATCC 204508 / S288c) (Baker's yeast).